The chain runs to 299 residues: Diaminopimelate epimerase (299 aa).

Substrate is bound by residues asparagine 15, glutamine 47, and asparagine 67. Catalysis depends on cysteine 76, which acts as the Proton donor. Substrate contacts are provided by residues 77 to 78 (GN), asparagine 163, asparagine 197, and 215 to 216 (ER). Residue cysteine 224 is the Proton acceptor of the active site. 225 to 226 (GS) contacts substrate.

This sequence belongs to the diaminopimelate epimerase family. In terms of assembly, homodimer.

Its subcellular location is the cytoplasm. It carries out the reaction (2S,6S)-2,6-diaminopimelate = meso-2,6-diaminopimelate. It participates in amino-acid biosynthesis; L-lysine biosynthesis via DAP pathway; DL-2,6-diaminopimelate from LL-2,6-diaminopimelate: step 1/1. Its function is as follows. Catalyzes the stereoinversion of LL-2,6-diaminopimelate (L,L-DAP) to meso-diaminopimelate (meso-DAP), a precursor of L-lysine and an essential component of the bacterial peptidoglycan. In Agrobacterium fabrum (strain C58 / ATCC 33970) (Agrobacterium tumefaciens (strain C58)), this protein is Diaminopimelate epimerase.